Consider the following 135-residue polypeptide: VapC ribonuclease aq_1901 (135 aa).

Residues L3–N130 enclose the PINc domain. D5 provides a ligand contact to Mg(2+).

Belongs to the PINc/VapC protein family. Requires Mg(2+) as cofactor.

Functionally, toxic component of a type II toxin-antitoxin (TA) system. An RNase. The polypeptide is VapC ribonuclease aq_1901 (Aquifex aeolicus (strain VF5)).